The sequence spans 341 residues: Phenylalanine--tRNA ligase alpha subunit (341 aa).

Mg(2+) is bound at residue E256.

It belongs to the class-II aminoacyl-tRNA synthetase family. Phe-tRNA synthetase alpha subunit type 1 subfamily. In terms of assembly, tetramer of two alpha and two beta subunits. Mg(2+) is required as a cofactor.

The protein resides in the cytoplasm. It carries out the reaction tRNA(Phe) + L-phenylalanine + ATP = L-phenylalanyl-tRNA(Phe) + AMP + diphosphate + H(+). The chain is Phenylalanine--tRNA ligase alpha subunit from Chlamydia caviae (strain ATCC VR-813 / DSM 19441 / 03DC25 / GPIC) (Chlamydophila caviae).